Here is a 363-residue protein sequence, read N- to C-terminus: Protein arginine N-methyltransferase 2 (363 aa).

ANK repeat units lie at residues 22 to 46 and 48 to 80; these read AAQT…FQDD and LGWS…AVDK. In terms of domain architecture, RMT2 spans 111-363; that stretch reads KTSAGDNLVF…RLPIAKMSLI (253 aa). S-adenosyl-L-methionine-binding positions include F120, 186 to 191, 209 to 211, 236 to 237, and D265; these read FGLGIV, EAH, and WQ.

This sequence belongs to the class I-like SAM-binding methyltransferase superfamily. RMT2 methyltransferase family. In terms of assembly, monomer.

The protein localises to the cytoplasm. It localises to the nucleus. S-adenosyl-L-methionine-dependent protein-arginine N-methyltransferase that methylates the delta-nitrogen atom of arginine residues to form N5-methylarginine (type IV) in target proteins. Monomethylates ribosomal protein L12. In Cryptococcus neoformans var. neoformans serotype D (strain B-3501A) (Filobasidiella neoformans), this protein is Protein arginine N-methyltransferase 2.